The chain runs to 132 residues: Cytochrome c-554 (132 aa).

Positions 1–24 (MKSISMLTLAASVAFAVTAGQAVA) are cleaved as a signal peptide. Residues 26-126 (GDPAAGEKVF…NVWAYLSQFG (101 aa)) enclose the Cytochrome c domain. Heme c-binding residues include cysteine 38, cysteine 41, histidine 42, and methionine 104.

Post-translationally, binds 1 heme c group covalently per subunit.

The protein localises to the periplasm. The sequence is that of Cytochrome c-554 from Methylosinus trichosporium.